The sequence spans 215 residues: Cytochrome b6 (215 aa).

The chain crosses the membrane as a helical span at residues 32-52; that stretch reads LFYCLGGITLTCFLIQVATGF. Cysteine 35 is a binding site for heme c. Heme b is bound by residues histidine 86 and histidine 100. 3 consecutive transmembrane segments (helical) span residues 90–110, 116–136, and 186–206; these read ASMM…TGGF, STWV…VTGY, and LHTF…FLMI. Residues histidine 187 and histidine 202 each contribute to the heme b site.

The protein belongs to the cytochrome b family. PetB subfamily. The 4 large subunits of the cytochrome b6-f complex are cytochrome b6, subunit IV (17 kDa polypeptide, PetD), cytochrome f and the Rieske protein, while the 4 small subunits are PetG, PetL, PetM and PetN. The complex functions as a dimer. Heme b is required as a cofactor. Heme c serves as cofactor.

The protein resides in the plastid. The protein localises to the chloroplast thylakoid membrane. Component of the cytochrome b6-f complex, which mediates electron transfer between photosystem II (PSII) and photosystem I (PSI), cyclic electron flow around PSI, and state transitions. This chain is Cytochrome b6, found in Bigelowiella natans (Pedinomonas minutissima).